The following is a 98-amino-acid chain: Large ribosomal subunit protein uL23 (98 aa).

It belongs to the universal ribosomal protein uL23 family. In terms of assembly, part of the 50S ribosomal subunit. Contacts protein L29, and trigger factor when it is bound to the ribosome.

Its function is as follows. One of the early assembly proteins it binds 23S rRNA. One of the proteins that surrounds the polypeptide exit tunnel on the outside of the ribosome. Forms the main docking site for trigger factor binding to the ribosome. This is Large ribosomal subunit protein uL23 from Halorhodospira halophila (strain DSM 244 / SL1) (Ectothiorhodospira halophila (strain DSM 244 / SL1)).